The chain runs to 379 residues: Isocitrate dehydrogenase [NAD] subunit 2, mitochondrial (379 aa).

The transit peptide at 1–27 directs the protein to the mitochondrion; it reads MSMLSTLRTAGSLRTFSRSACYSFQRF. Residues Arg129, Arg139, Arg160, and Asp247 each contribute to the substrate site. Residues Asp247, Asp273, and Asp277 each coordinate Mg(2+).

It belongs to the isocitrate and isopropylmalate dehydrogenases family. Octamer of two non-identical subunits IDH1 and IDH2. Requires Mg(2+) as cofactor. Mn(2+) is required as a cofactor.

The protein resides in the mitochondrion. The enzyme catalyses D-threo-isocitrate + NAD(+) = 2-oxoglutarate + CO2 + NADH. Performs an essential role in the oxidative function of the citric acid cycle and is involved in glutamate biosynthesis. Also binds RNA; specifically to the 5'-untranslated leaders of mitochondrial mRNAs. The sequence is that of Isocitrate dehydrogenase [NAD] subunit 2, mitochondrial (idh2) from Schizosaccharomyces pombe (strain 972 / ATCC 24843) (Fission yeast).